The chain runs to 34 residues: Peptidoglycan hydrolase P7 (34 aa).

Residues 10–26 (VLITLGVLAAVNKVSAL) form a helical membrane-spanning segment.

The protein localises to the virion membrane. Its function is as follows. Exolysin that catalyzes the cleavage of the host peptidoglycans during virus entry. This Pseudoalteromonas espejiana (Bacteriophage PM2) protein is Peptidoglycan hydrolase P7 (VII).